The chain runs to 273 residues: Transmembrane protein 45A (273 aa).

Transmembrane regions (helical) follow at residues 8–27 (ALPG…KNIL), 55–79 (VVVL…ALIL), 108–131 (IICF…AIFV), 153–171 (LLVF…EFLV), and 217–236 (MFLS…LIGV).

This sequence belongs to the TMEM45 family.

Its subcellular location is the membrane. The chain is Transmembrane protein 45A (Tmem45a) from Mus musculus (Mouse).